The chain runs to 146 residues: Early E3 16 kDa glycoprotein (146 aa).

N-linked (GlcNAc...) asparagine; by host glycans are attached at residues Asn51 and Asn84.

Its function is as follows. E3 proteins seem to be dispensable for virus growth in tissue culture cells. They are potentially important for virus growth under special conditions; E3 region may help adenoviruses to evade the immune surveillance of the host. The polypeptide is Early E3 16 kDa glycoprotein (Human adenovirus B serotype 3 (HAdV-3)).